The chain runs to 786 residues: Endonuclease MutS2 (786 aa).

335 to 342 is a binding site for ATP; sequence GPNTGGKT. Positions 711–786 constitute a Smr domain; it reads LDLRGERFEN…GLGVTVVELK (76 aa).

This sequence belongs to the DNA mismatch repair MutS family. MutS2 subfamily. Homodimer. Binds to stalled ribosomes, contacting rRNA.

Functionally, endonuclease that is involved in the suppression of homologous recombination and thus may have a key role in the control of bacterial genetic diversity. Its function is as follows. Acts as a ribosome collision sensor, splitting the ribosome into its 2 subunits. Detects stalled/collided 70S ribosomes which it binds and splits by an ATP-hydrolysis driven conformational change. Acts upstream of the ribosome quality control system (RQC), a ribosome-associated complex that mediates the extraction of incompletely synthesized nascent chains from stalled ribosomes and their subsequent degradation. Probably generates substrates for RQC. The protein is Endonuclease MutS2 of Bacillus anthracis (strain A0248).